The primary structure comprises 222 residues: CCA-adding enzyme (222 aa).

2 residues coordinate ATP: Ser-50 and Lys-53. 2 residues coordinate CTP: Ser-50 and Lys-53. Mg(2+) is bound by residues Asp-61, Asp-63, and Asp-112. The ATP site is built by His-135, Lys-155, and Tyr-164. CTP-binding residues include His-135, Lys-155, and Tyr-164.

It belongs to the tRNA nucleotidyltransferase/poly(A) polymerase family. Archaeal CCA-adding enzyme subfamily. Homodimer. Mg(2+) is required as a cofactor.

It carries out the reaction a tRNA precursor + 2 CTP + ATP = a tRNA with a 3' CCA end + 3 diphosphate. The catalysed reaction is a tRNA with a 3' CCA end + 2 CTP + ATP = a tRNA with a 3' CCACCA end + 3 diphosphate. Functionally, catalyzes the addition and repair of the essential 3'-terminal CCA sequence in tRNAs without using a nucleic acid template. Adds these three nucleotides in the order of C, C, and A to the tRNA nucleotide-73, using CTP and ATP as substrates and producing inorganic pyrophosphate. tRNA 3'-terminal CCA addition is required both for tRNA processing and repair. Also involved in tRNA surveillance by mediating tandem CCA addition to generate a CCACCA at the 3' terminus of unstable tRNAs. While stable tRNAs receive only 3'-terminal CCA, unstable tRNAs are marked with CCACCA and rapidly degraded. This is CCA-adding enzyme from Thermoplasma acidophilum.